A 283-amino-acid polypeptide reads, in one-letter code: Phosphatidylglycerol--prolipoprotein diacylglyceryl transferase (283 aa).

Transmembrane regions (helical) follow at residues 20-40, 60-80, 94-114, and 121-141; these read IGGFALRWYGFLIASAVIIGL, LVIWLVVAAIPSARLYYVAFE, IWQGGIAIHGALIGGTIAILV, and LSFWNLLDVLTPAVILGQAIG. Arg142 serves as a coordination point for a 1,2-diacyl-sn-glycero-3-phospho-(1'-sn-glycerol). A run of 3 helical transmembrane segments spans residues 183–203, 214–234, and 248–268; these read FLYESVWNLGIFAILIALFFY, GTITCVYLIGYSLGRVWIEGL, and QVVSITLVLLGTAGIVWLYLL.

It belongs to the Lgt family.

It is found in the cell inner membrane. The catalysed reaction is L-cysteinyl-[prolipoprotein] + a 1,2-diacyl-sn-glycero-3-phospho-(1'-sn-glycerol) = an S-1,2-diacyl-sn-glyceryl-L-cysteinyl-[prolipoprotein] + sn-glycerol 1-phosphate + H(+). Its pathway is protein modification; lipoprotein biosynthesis (diacylglyceryl transfer). In terms of biological role, catalyzes the transfer of the diacylglyceryl group from phosphatidylglycerol to the sulfhydryl group of the N-terminal cysteine of a prolipoprotein, the first step in the formation of mature lipoproteins. This chain is Phosphatidylglycerol--prolipoprotein diacylglyceryl transferase, found in Synechocystis sp. (strain ATCC 27184 / PCC 6803 / Kazusa).